Reading from the N-terminus, the 357-residue chain is Probable dual-specificity RNA methyltransferase RlmN (357 aa).

Glu-92 acts as the Proton acceptor in catalysis. Positions 98 to 330 constitute a Radical SAM core domain; it reads QEYGLSVCVT…KKNGINCVIR (233 aa). Cys-105 and Cys-341 are joined by a disulfide. 3 residues coordinate [4Fe-4S] cluster: Cys-112, Cys-116, and Cys-119. Residues 164–165, Ser-196, 219–221, and Asn-297 each bind S-adenosyl-L-methionine; these read GE and SLH. The S-methylcysteine intermediate role is filled by Cys-341.

This sequence belongs to the radical SAM superfamily. RlmN family. It depends on [4Fe-4S] cluster as a cofactor.

It is found in the cytoplasm. It carries out the reaction adenosine(2503) in 23S rRNA + 2 reduced [2Fe-2S]-[ferredoxin] + 2 S-adenosyl-L-methionine = 2-methyladenosine(2503) in 23S rRNA + 5'-deoxyadenosine + L-methionine + 2 oxidized [2Fe-2S]-[ferredoxin] + S-adenosyl-L-homocysteine. The enzyme catalyses adenosine(37) in tRNA + 2 reduced [2Fe-2S]-[ferredoxin] + 2 S-adenosyl-L-methionine = 2-methyladenosine(37) in tRNA + 5'-deoxyadenosine + L-methionine + 2 oxidized [2Fe-2S]-[ferredoxin] + S-adenosyl-L-homocysteine. Specifically methylates position 2 of adenine 2503 in 23S rRNA and position 2 of adenine 37 in tRNAs. The protein is Probable dual-specificity RNA methyltransferase RlmN of Enterococcus faecalis (strain ATCC 700802 / V583).